The chain runs to 233 residues: Small ribosomal subunit protein uS3 (233 aa).

The 69-residue stretch at 39 to 107 (IRAFLKRKLY…DVNINIKEER (69 aa)) folds into the KH type-2 domain. The segment covering 212 to 222 (MQPEKTEESAP) has biased composition (basic and acidic residues). The disordered stretch occupies residues 212 to 233 (MQPEKTEESAPAKKPRRTRRGK). Over residues 224-233 (KKPRRTRRGK) the composition is skewed to basic residues.

Belongs to the universal ribosomal protein uS3 family. Part of the 30S ribosomal subunit. Forms a tight complex with proteins S10 and S14.

Its function is as follows. Binds the lower part of the 30S subunit head. Binds mRNA in the 70S ribosome, positioning it for translation. The polypeptide is Small ribosomal subunit protein uS3 (Campylobacter jejuni subsp. jejuni serotype O:6 (strain 81116 / NCTC 11828)).